A 137-amino-acid chain; its full sequence is MLFVPRKTKHSKSFKGRISGNTKGGSELAFGQCGLKALEPCRLTSKQIESARRSISRSLRRVGKVWIRVFCHVPVSKKPVDVRMGKGKGSTEMWVCKVQPGRILFEIGGVSVELAREAFRKAQSKLPIKCSFVEEGF.

This sequence belongs to the universal ribosomal protein uL16 family. In terms of assembly, part of the 50S ribosomal subunit.

Binds 23S rRNA and is also seen to make contacts with the A and possibly P site tRNAs. This chain is Large ribosomal subunit protein uL16, found in Anaplasma phagocytophilum (strain HZ).